A 289-amino-acid polypeptide reads, in one-letter code: D-alanine aminotransferase (289 aa).

Tyrosine 31 serves as a coordination point for substrate. Arginine 50 is a pyridoxal 5'-phosphate binding site. 2 residues coordinate substrate: arginine 99 and histidine 101. Lysine 147 carries the post-translational modification N6-(pyridoxal phosphate)lysine. Glutamate 179 contributes to the pyridoxal 5'-phosphate binding site.

The protein belongs to the class-IV pyridoxal-phosphate-dependent aminotransferase family. In terms of assembly, homodimer. It depends on pyridoxal 5'-phosphate as a cofactor.

It catalyses the reaction D-alanine + 2-oxoglutarate = D-glutamate + pyruvate. Functionally, acts on the D-isomers of alanine, leucine, aspartate, glutamate, aminobutyrate, norvaline and asparagine. The enzyme transfers an amino group from a substrate D-amino acid to the pyridoxal phosphate cofactor to form pyridoxamine and an alpha-keto acid in the first half-reaction. The second half-reaction is the reverse of the first, transferring the amino group from the pyridoxamine to a second alpha-keto acid to form the product D-amino acid via a ping-pong mechanism. This is an important process in the formation of D-alanine and D-glutamate, which are essential bacterial cell wall components. This Listeria monocytogenes serotype 1/2a (strain 10403S) protein is D-alanine aminotransferase (dat).